We begin with the raw amino-acid sequence, 431 residues long: Protein SHQ1 homolog (431 aa).

This sequence belongs to the SHQ1 family.

Its function is as follows. Required for the quantitative accumulation of H/ACA ribonucleoproteins (RNPs). This Caenorhabditis elegans protein is Protein SHQ1 homolog.